The chain runs to 105 residues: Thioredoxin (105 aa).

The Thioredoxin domain occupies 2-105 (VKQIESKTAF…KLEATINELV (104 aa)). K3 is subject to N6-acetyllysine. At K8 the chain carries N6-succinyllysine. Catalysis depends on nucleophile residues C32 and C35. A disulfide bond links C32 and C35. Residue K39 is modified to N6-acetyllysine. Residues C62 and C69 each carry the S-nitrosocysteine modification. Residue C73 is modified to S-nitrosocysteine; alternate. K94 bears the N6-acetyllysine; alternate mark. K94 bears the N6-succinyllysine; alternate mark.

This sequence belongs to the thioredoxin family. In terms of assembly, homodimer; disulfide-linked. Interacts with TXNIP through the redox-active site. Interacts with MAP3K5 and CASP3. In case of infection, interacts with S.typhimurium protein slrP. Interacts with APEX1; the interaction stimulates the FOS/JUN AP-1 DNA-binding activity in a redox-dependent manner. In terms of processing, in the fully reduced protein, both Cys-69 and Cys-73 are nitrosylated in response to nitric oxide (NO). When two disulfide bonds are present in the protein, only Cys-73 is nitrosylated. Cys-73 can serve as donor for nitrosylation of target proteins. In case of infection, ubiquitinated by S.typhimurium protein slrP, leading to its degradation.

The protein localises to the nucleus. Its subcellular location is the cytoplasm. It is found in the secreted. Participates in various redox reactions through the reversible oxidation of its active center dithiol to a disulfide and catalyzes dithiol-disulfide exchange reactions. Plays a role in the reversible S-nitrosylation of cysteine residues in target proteins, and thereby contributes to the response to intracellular nitric oxide. Nitrosylates the active site Cys of CASP3 in response to nitric oxide (NO), and thereby inhibits caspase-3 activity. Induces the FOS/JUN AP-1 DNA-binding activity in ionizing radiation (IR) cells through its oxidation/reduction status and stimulates AP-1 transcriptional activity. Functionally, ADF augments the expression of the interleukin-2 receptor TAC (IL2R/P55). The sequence is that of Thioredoxin (TXN) from Homo sapiens (Human).